Here is a 339-residue protein sequence, read N- to C-terminus: Adenosine deaminase (339 aa).

Zn(2+)-binding residues include H15 and H17. Residues H17, D19, and G172 each coordinate substrate. H199 provides a ligand contact to Zn(2+). The active-site Proton donor is the E202. Residue D279 participates in Zn(2+) binding.

This sequence belongs to the metallo-dependent hydrolases superfamily. Adenosine and AMP deaminases family. Adenosine deaminase subfamily. It depends on Zn(2+) as a cofactor.

It catalyses the reaction adenosine + H2O + H(+) = inosine + NH4(+). It carries out the reaction 2'-deoxyadenosine + H2O + H(+) = 2'-deoxyinosine + NH4(+). In terms of biological role, catalyzes the hydrolytic deamination of adenosine and 2-deoxyadenosine. The sequence is that of Adenosine deaminase from Lacticaseibacillus paracasei (strain ATCC 334 / BCRC 17002 / CCUG 31169 / CIP 107868 / KCTC 3260 / NRRL B-441) (Lactobacillus paracasei).